Here is a 205-residue protein sequence, read N- to C-terminus: FMN reductase (NADH) RutF (205 aa).

The disordered stretch occupies residues 171 to 205 (PRAPRSGSAPAEPARAARALGARPAEGPALALRSA).

This sequence belongs to the non-flavoprotein flavin reductase family. RutF subfamily.

It catalyses the reaction FMNH2 + NAD(+) = FMN + NADH + 2 H(+). Functionally, catalyzes the reduction of FMN to FMNH2 which is used to reduce pyrimidine by RutA via the Rut pathway. The chain is FMN reductase (NADH) RutF from Methylorubrum extorquens (strain DSM 6343 / CIP 106787 / DM4) (Methylobacterium extorquens).